Reading from the N-terminus, the 456-residue chain is Chromosomal replication initiator protein DnaA 1 (456 aa).

Positions 1 to 68 are domain I, interacts with DnaA modulators; that stretch reads MRAWEEFLLL…KASLINNNGK (68 aa). The interval 68-101 is domain II; sequence KPIRVRVTSLDKSTPFKETQIQQEKTAYFTMKYG. The tract at residues 102 to 320 is domain III, AAA+ region; that stretch reads DIDPNMSFAN…HALTTLAKRV (219 aa). Residues serine 150, glycine 152, lysine 153, and threonine 154 each coordinate ATP. Positions 321–456 are domain IV, binds dsDNA; that stretch reads AYKKLSHQML…AYQSLDFIED (136 aa).

This sequence belongs to the DnaA family. As to quaternary structure, oligomerizes as a right-handed, spiral filament on DNA at oriC.

It is found in the cytoplasm. Its function is as follows. Plays an essential role in the initiation and regulation of chromosomal replication. ATP-DnaA binds to the origin of replication (oriC) to initiate formation of the DNA replication initiation complex once per cell cycle. Binds the DnaA box (a 9 base pair repeat at the origin) and separates the double-stranded (ds)DNA. Forms a right-handed helical filament on oriC DNA; dsDNA binds to the exterior of the filament while single-stranded (ss)DNA is stabiized in the filament's interior. The ATP-DnaA-oriC complex binds and stabilizes one strand of the AT-rich DNA unwinding element (DUE), permitting loading of DNA polymerase. After initiation quickly degrades to an ADP-DnaA complex that is not apt for DNA replication. Binds acidic phospholipids. In Chlamydia trachomatis serovar D (strain ATCC VR-885 / DSM 19411 / UW-3/Cx), this protein is Chromosomal replication initiator protein DnaA 1.